An 83-amino-acid chain; its full sequence is Cytochrome b559 subunit alpha (83 aa).

Residues 21–35 (IIHSITIPSLFIAGW) traverse the membrane as a helical segment. Heme is bound at residue histidine 23.

In terms of assembly, heterodimer of an alpha subunit and a beta subunit. PSII is composed of 1 copy each of membrane proteins PsbA, PsbB, PsbC, PsbD, PsbE, PsbF, PsbH, PsbI, PsbJ, PsbK, PsbL, PsbM, PsbT, PsbX, PsbY, PsbZ, Psb30/Ycf12, at least 3 peripheral proteins of the oxygen-evolving complex and a large number of cofactors. It forms dimeric complexes. The cofactor is heme b.

Its subcellular location is the plastid. It localises to the chloroplast thylakoid membrane. Its function is as follows. This b-type cytochrome is tightly associated with the reaction center of photosystem II (PSII). PSII is a light-driven water:plastoquinone oxidoreductase that uses light energy to abstract electrons from H(2)O, generating O(2) and a proton gradient subsequently used for ATP formation. It consists of a core antenna complex that captures photons, and an electron transfer chain that converts photonic excitation into a charge separation. This is Cytochrome b559 subunit alpha from Pisum sativum (Garden pea).